Here is a 238-residue protein sequence, read N- to C-terminus: LexA repressor (238 aa).

The segment at residues 26–46 (FDEMKDALDLASKSGIHRLIT) is a DNA-binding region (H-T-H motif). Active-site for autocatalytic cleavage activity residues include Ser158 and Lys196.

It belongs to the peptidase S24 family. In terms of assembly, homodimer.

The catalysed reaction is Hydrolysis of Ala-|-Gly bond in repressor LexA.. Its function is as follows. Represses a number of genes involved in the response to DNA damage (SOS response), including recA and lexA. In the presence of single-stranded DNA, RecA interacts with LexA causing an autocatalytic cleavage which disrupts the DNA-binding part of LexA, leading to derepression of the SOS regulon and eventually DNA repair. This Sinorhizobium medicae (strain WSM419) (Ensifer medicae) protein is LexA repressor.